The chain runs to 415 residues: Squalene synthase 12 (415 aa).

2 helical membrane-spanning segments follow: residues A281–F301 and L391–L411.

Belongs to the phytoene/squalene synthase family. Requires Mg(2+) as cofactor. It depends on Mn(2+) as a cofactor.

It localises to the endoplasmic reticulum membrane. It carries out the reaction 2 (2E,6E)-farnesyl diphosphate + NADH + H(+) = squalene + 2 diphosphate + NAD(+). It catalyses the reaction 2 (2E,6E)-farnesyl diphosphate + NADPH + H(+) = squalene + 2 diphosphate + NADP(+). Its pathway is terpene metabolism; lanosterol biosynthesis; lanosterol from farnesyl diphosphate: step 1/3. Component of the triterpene saponins (e.g. ginsenosides or panaxosides) and phytosterols biosynthetic pathways. Catalyzes the biosynthesis of squalene. This Panax ginseng (Korean ginseng) protein is Squalene synthase 12.